Reading from the N-terminus, the 274-residue chain is Enoyl-CoA isomerase/hydratase fer4 (274 aa).

Substrate-binding positions include 77–81 (AGADL) and glycine 124. Positions 79 to 109 (ADLKERREMSEAEVIEFLQDLRHMLEQVEKL) form a coiled coil.

The protein belongs to the enoyl-CoA hydratase/isomerase family.

It catalyses the reaction a (3S)-3-hydroxyacyl-CoA = a (2E)-enoyl-CoA + H2O. The catalysed reaction is a 4-saturated-(3S)-3-hydroxyacyl-CoA = a (3E)-enoyl-CoA + H2O. It functions in the pathway siderophore biosynthesis. Its function is as follows. Enoyl-CoA isomerase/hydratase; part of the gene cluster that mediates the biosynthesis of siderophore ferrichrome A which is contributing to organismal virulence. The first step of ferrichrome A biosynthesis is performed by the HMG-CoA synthase hcs1 which catalyzes the generation of HMG-CoA and CoA using acetoacetyl-CoA and acetyl-CoA as substrates. The enoyl-CoA isomerase/hydratase fer4 then catalyzes the conversion of hcs1-produced HMG-CoA to methylglutaconyl-CoA. The acyltransferase fer5 then fuses the fer4-generated methylglutaconyl-CoA with sid1-generated hydroxyornithine to yield methylglutaconyl hydroxyornithine. Methylglutaconyl hydroxyornithine is then available for use by the NRPS fer3 to generate ferrichrome A. This Mycosarcoma maydis (Corn smut fungus) protein is Enoyl-CoA isomerase/hydratase fer4.